Here is a 510-residue protein sequence, read N- to C-terminus: Light-independent protochlorophyllide reductase subunit B (510 aa).

Asp36 is a binding site for [4Fe-4S] cluster. Catalysis depends on Asp296, which acts as the Proton donor. A substrate-binding site is contributed by 431–432 (GM).

Belongs to the ChlB/BchB/BchZ family. In terms of assembly, protochlorophyllide reductase is composed of three subunits; ChlL, ChlN and ChlB. Forms a heterotetramer of two ChlB and two ChlN subunits. It depends on [4Fe-4S] cluster as a cofactor.

It is found in the plastid. Its subcellular location is the chloroplast. The enzyme catalyses chlorophyllide a + oxidized 2[4Fe-4S]-[ferredoxin] + 2 ADP + 2 phosphate = protochlorophyllide a + reduced 2[4Fe-4S]-[ferredoxin] + 2 ATP + 2 H2O. The protein operates within porphyrin-containing compound metabolism; chlorophyll biosynthesis (light-independent). Functionally, component of the dark-operative protochlorophyllide reductase (DPOR) that uses Mg-ATP and reduced ferredoxin to reduce ring D of protochlorophyllide (Pchlide) to form chlorophyllide a (Chlide). This reaction is light-independent. The NB-protein (ChlN-ChlB) is the catalytic component of the complex. The protein is Light-independent protochlorophyllide reductase subunit B of Chlorokybus atmophyticus (Soil alga).